The chain runs to 269 residues: Formamidopyrimidine-DNA glycosylase (269 aa).

Residue Pro-2 is the Schiff-base intermediate with DNA of the active site. The active-site Proton donor is Glu-3. Lys-57 acts as the Proton donor; for beta-elimination activity in catalysis. 3 residues coordinate DNA: His-90, Arg-109, and Lys-150. The segment at 235-269 (QVYGKAGEPCPECGEAIQEQKIGQRNTFYCSYCQC) adopts an FPG-type zinc-finger fold. Catalysis depends on Arg-259, which acts as the Proton donor; for delta-elimination activity.

It belongs to the FPG family. In terms of assembly, monomer. Zn(2+) serves as cofactor.

The catalysed reaction is Hydrolysis of DNA containing ring-opened 7-methylguanine residues, releasing 2,6-diamino-4-hydroxy-5-(N-methyl)formamidopyrimidine.. It catalyses the reaction 2'-deoxyribonucleotide-(2'-deoxyribose 5'-phosphate)-2'-deoxyribonucleotide-DNA = a 3'-end 2'-deoxyribonucleotide-(2,3-dehydro-2,3-deoxyribose 5'-phosphate)-DNA + a 5'-end 5'-phospho-2'-deoxyribonucleoside-DNA + H(+). Its function is as follows. Involved in base excision repair of DNA damaged by oxidation or by mutagenic agents. Acts as a DNA glycosylase that recognizes and removes damaged bases. Has a preference for oxidized purines, such as 7,8-dihydro-8-oxoguanine (8-oxoG). Has AP (apurinic/apyrimidinic) lyase activity and introduces nicks in the DNA strand. Cleaves the DNA backbone by beta-delta elimination to generate a single-strand break at the site of the removed base with both 3'- and 5'-phosphates. The polypeptide is Formamidopyrimidine-DNA glycosylase (Vibrio vulnificus (strain CMCP6)).